The chain runs to 164 residues: Ecotin (164 aa).

A signal peptide spans 1–20 (MKMFVPAVVFAALASASAWA). The cysteines at positions 72 and 109 are disulfide-linked.

The protein belongs to the protease inhibitor I11 (ecotin) family. Homodimer.

It is found in the periplasm. In terms of biological role, general inhibitor of pancreatic serine proteases: inhibits chymotrypsin, trypsin, elastases, factor X, kallikrein as well as a variety of other proteases. The protein is Ecotin of Salmonella paratyphi A (strain ATCC 9150 / SARB42).